The sequence spans 72 residues: UPF0270 protein YheU (72 aa).

The protein belongs to the UPF0270 family.

The polypeptide is UPF0270 protein YheU (Escherichia fergusonii (strain ATCC 35469 / DSM 13698 / CCUG 18766 / IAM 14443 / JCM 21226 / LMG 7866 / NBRC 102419 / NCTC 12128 / CDC 0568-73)).